The sequence spans 194 residues: Outer surface 22 kDa lipoprotein (194 aa).

Residues 1–21 (MYKNGFFKNYLSLFLIFLVIA) form the signal peptide. A lipid anchor (N-palmitoyl cysteine) is attached at C22. C22 carries S-diacylglycerol cysteine lipidation.

The protein resides in the cell outer membrane. The protein is Outer surface 22 kDa lipoprotein (p22) of Borreliella burgdorferi (strain ZS7) (Borrelia burgdorferi).